The chain runs to 563 residues: MEVFASVLNCCFKYIVLPVWIFIVLLLLHRDLSSWDGLMGPLSHPGLGENGSASYLSVPSWEIDEYTQGWRYYLYNSWLAERIPLRRSLPDLRDHRCQKLEYDEDSDEMKPASIIMIFRNEQLVVLLRTLHSLVERTPKYLYIELILVNDHSDTDFWNDKLSLIFFDNYVHRYIHPKARILHLPEQVGLIKARNLAASEAKAENLVFVDAQVEFTNGWLSPLLDTIAEQSYTLATPILDNLDEQTLAYQRSIERRGMYDWSLTRREVPLSRARRSHLPWPYEVAAVRTSVFAIPAVWFQDISNFDNNLRGFGAAELELSFKVWCTGGRIVQVPCSRVGHLQPKDEDYLKRYGDLHKMGEQKSRNLKRIIEVWTGDLKSAIYKYQPHLLNISEGDLNEPRKLYKQNECQSFKEFINDITPGLNHVAALNRTDYASGHVKTLEFPKKCLTINAKSQNLFLERCSTNNTLQNWTLTYVKDLRVAGNICAEVRPNLRLGYSFCHSLGGRQSWHYDSVSNQLMSNTKCLEFTDELNIFLAICDAANGKQRWILDNINLSVMQSANILV.

Over 1–6 the chain is Cytoplasmic; sequence MEVFAS. The helical; Signal-anchor for type II membrane protein transmembrane segment at 7-29 threads the bilayer; it reads VLNCCFKYIVLPVWIFIVLLLLH. The Lumenal portion of the chain corresponds to 30–563; it reads RDLSSWDGLM…SVMQSANILV (534 aa). N-linked (GlcNAc...) asparagine glycosylation occurs at N50. Cysteines 97 and 334 form a disulfide. A catalytic subdomain A region spans residues 109-225; sequence MKPASIIMIF…NGWLSPLLDT (117 aa). The segment at 280–342 is catalytic subdomain B; the sequence is PYEVAAVRTS…PCSRVGHLQP (63 aa). N-linked (GlcNAc...) asparagine glycans are attached at residues N389 and N428. In terms of domain architecture, Ricin B-type lectin spans 433 to 549; it reads ASGHVKTLEF…ANGKQRWILD (117 aa). The cysteines at positions 446 and 461 are disulfide-linked. N-linked (GlcNAc...) asparagine glycans are attached at residues N464 and N469. 2 disulfide bridges follow: C485–C499 and C523–C537. N-linked (GlcNAc...) asparagine glycosylation is present at N552.

Belongs to the glycosyltransferase 2 family. GalNAc-T subfamily.

The protein resides in the golgi apparatus membrane. Functionally, probable inactive glycosyltransferase. This Drosophila melanogaster (Fruit fly) protein is Putative inactive polypeptide N-acetylgalactosaminyltransferase 12 (pgant12).